Here is a 454-residue protein sequence, read N- to C-terminus: tRNA modification GTPase MnmE (454 aa).

Residues Arg-23, Glu-80, and Lys-120 each contribute to the (6S)-5-formyl-5,6,7,8-tetrahydrofolate site. One can recognise a TrmE-type G domain in the interval 216 to 377 (GMKVVIAGRP…LRNHLKQSMG (162 aa)). Asn-226 lines the K(+) pocket. Residues 226–231 (NAGKSS), 245–251 (TDIAGTT), 270–273 (DTAG), 335–338 (NKAD), and 358–360 (SAR) each bind GTP. Ser-230 lines the Mg(2+) pocket. The K(+) site is built by Thr-245, Ile-247, and Thr-250. Thr-251 provides a ligand contact to Mg(2+). Lys-454 contributes to the (6S)-5-formyl-5,6,7,8-tetrahydrofolate binding site.

It belongs to the TRAFAC class TrmE-Era-EngA-EngB-Septin-like GTPase superfamily. TrmE GTPase family. In terms of assembly, homodimer. Heterotetramer of two MnmE and two MnmG subunits. K(+) is required as a cofactor.

It localises to the cytoplasm. In terms of biological role, exhibits a very high intrinsic GTPase hydrolysis rate. Involved in the addition of a carboxymethylaminomethyl (cmnm) group at the wobble position (U34) of certain tRNAs, forming tRNA-cmnm(5)s(2)U34. This is tRNA modification GTPase MnmE from Escherichia coli O17:K52:H18 (strain UMN026 / ExPEC).